We begin with the raw amino-acid sequence, 487 residues long: WRKY transcription factor 1 (487 aa).

The disordered stretch occupies residues 69 to 104 (QSEVDVASPVSEKAPKVSESSGALSLQSGSEGNSPF). A Phosphoserine modification is found at serine 76. Residues 86–101 (SESSGALSLQSGSEGN) are compositionally biased toward polar residues. The segment at residues 105–169 (IREKVMEDGY…YFGEHDHPKP (65 aa)) is a DNA-binding region (WRKY 1). Zn(2+) contacts are provided by cysteine 136, cysteine 141, histidine 164, and histidine 166. The tract at residues 255 to 287 (SSRITGDNTHKDYNSPTAKRRKKGGNIELSPVE) is disordered. Residues 273 to 277 (KRRKK) carry the Nuclear localization signal motif. The WRKY 2 DNA-binding region spans 301-366 (TLFDIVNDGY…YEGKHDHDMP (66 aa)). The Zn(2+) site is built by cysteine 332, cysteine 337, histidine 361, and histidine 363. Residues 380–487 (EVDDKEGDAN…QKPKTEPAQS (108 aa)) are disordered. Polar residues predominate over residues 390–401 (KTPQSSTLQSIT). 2 stretches are compositionally biased toward basic and acidic residues: residues 429 to 462 (LDEK…DDKT) and 476 to 487 (EEQKPKTEPAQS).

The protein belongs to the WRKY group I family. Expressed to similar levels in root and flower, to a somewhat lower level in stem and to low levels in leaf and siliques.

The protein resides in the nucleus. Functionally, transcription factor. Binds to a 5'-CGTTGACCGAG-3' consensus core sequence which contains a W box, a frequently occurring elicitor-responsive cis-acting element. The polypeptide is WRKY transcription factor 1 (Arabidopsis thaliana (Mouse-ear cress)).